A 301-amino-acid polypeptide reads, in one-letter code: Multifunctional dioxygenase ausE (301 aa).

Residues Arg72 and Gln127 each coordinate substrate. Fe cation-binding residues include His130 and Asp132. Thr167 contributes to the substrate binding site. Residue His214 coordinates Fe cation. Substrate is bound at residue Arg226.

This sequence belongs to the PhyH family. As to quaternary structure, homodimer. Fe cation is required as a cofactor.

The catalysed reaction is preaustinoid A1 + 2-oxoglutarate + O2 = preaustinoid A2 + succinate + CO2 + H2O. The enzyme catalyses preaustinoid A2 + 2-oxoglutarate + O2 = preaustinoid A3 + succinate + CO2 + H2O. It catalyses the reaction berkeleyone A + 2-oxoglutarate + O2 = preaustinoid A + succinate + CO2 + H2O. The protein operates within secondary metabolite biosynthesis; terpenoid biosynthesis. In terms of biological role, multifunctional dioxygenase; part of the gene cluster A that mediates the biosynthesis of the fungal meroterpenoid acetoxydehydroaustin. The first step of the pathway is the synthesis of 3,5-dimethylorsellinic acid by the polyketide synthase ausA. 3,5-dimethylorsellinic acid is then prenylated by the polyprenyl transferase ausN. Further epoxidation by the FAD-dependent monooxygenase ausM and cyclization by the probable terpene cyclase ausL lead to the formation of protoaustinoid A. Protoaustinoid A is then oxidized to spiro-lactone preaustinoid A3 by the combined action of the FAD-binding monooxygenases ausB and ausC, and the dioxygenase ausE. Acid-catalyzed keto-rearrangement and ring contraction of the tetraketide portion of preaustinoid A3 by ausJ lead to the formation of preaustinoid A4. The aldo-keto reductase ausK, with the help of ausH, is involved in the next step by transforming preaustinoid A4 into isoaustinone which is in turn hydroxylated by the P450 monooxygenase ausI to form austinolide. The cytochrome P450 monooxygenase ausG then modifies austinolide to austinol. Austinol is further acetylated to austin by the O-acetyltransferase ausP, which spontaneously changes to dehydroaustin. The cytochrome P450 monooxygenase then converts dehydroaustin is into 7-dehydrodehydroaustin. The hydroxylation catalyzed by ausR permits the second O-acetyltransferase ausQ to add an additional acetyl group to the molecule, leading to the formation of acetoxydehydroaustin. Due to genetic rearrangements of the clusters and the subsequent loss of some enzymes, the end product of the Penicillium brasilianum austinoid biosynthesis clusters is acetoxydehydroaustin. This chain is Multifunctional dioxygenase ausE, found in Penicillium brasilianum.